The chain runs to 190 residues: METSTQRTGSHLAQTAAARHSASSRGEAARVSSRDELAEMAAASQGNFEGKFESLDLAELAKKQPWWRTLFGQESGPSAEKYSVATQLLIGGVTGWCTGFIFQKVGKLAATAVGGGFFLLQLANHTGYIKVDWQRVEKDMKKAKEQLKIRKSNQIPTEVKSKAEEVVSFVKKNVLVTGGFFGGFLLGMAS.

Over residues 1 to 13 the composition is skewed to polar residues; that stretch reads METSTQRTGSHLA. Residues 1 to 31 are disordered; it reads METSTQRTGSHLAQTAAARHSASSRGEAARV. Topologically, residues 1 to 81 are cytoplasmic; that stretch reads METSTQRTGS…GQESGPSAEK (81 aa). Phosphoserine is present on residues serine 10 and serine 54. The chain crosses the membrane as a helical span at residues 82–102; it reads YSVATQLLIGGVTGWCTGFIF. Over 103-108 the chain is Mitochondrial intermembrane; the sequence is QKVGKL. Residues 109-129 traverse the membrane as a helical segment; that stretch reads AATAVGGGFFLLQLANHTGYI. The Cytoplasmic portion of the chain corresponds to 130-165; that stretch reads KVDWQRVEKDMKKAKEQLKIRKSNQIPTEVKSKAEE. Serine 152 bears the Phosphoserine mark. The chain crosses the membrane as a helical span at residues 166-186; it reads VVSFVKKNVLVTGGFFGGFLL. Topologically, residues 187-190 are mitochondrial intermembrane; the sequence is GMAS.

Belongs to the FUN14 family.

Its subcellular location is the mitochondrion outer membrane. It is found in the nucleus. In terms of biological role, binds directly and specifically 1,2-Diacyl-sn-glycero-3-phospho-(1'-myo-inositol-3',4',5'-bisphosphate) (PIP3) leading to the recruitment of PIP3 to mitochondria and may play a role in the regulation of the platelet activation via AKT/GSK3B/cGMP signaling pathways. May act as transcription factor that regulates SREBP1 (isoform SREBP-1C) expression in order to modulate triglyceride (TG) homeostasis in hepatocytes. This chain is FUN14 domain-containing protein 2, found in Bos taurus (Bovine).